Reading from the N-terminus, the 331-residue chain is FMRFamide-related neuropeptides (331 aa).

The N-terminal stretch at 1–25 is a signal peptide; sequence MRCWSPCSLLVVIVIYCLSSHTSEA. The propeptide occupies 26-65; that stretch reads FDLAQACVESQRLSLLPICDTIFAVQQEGAQQSADDGMRS. Phe-71 and Phe-83 each carry phenylalanine amide. The propeptide occupies 86 to 94; it reads NVPDLPFED. Residue Phe-100 is modified to Phenylalanine amide. Residues 103-168 constitute a propeptide that is removed on maturation; it reads AAPQLDDLLK…YIDDVEDSDV (66 aa). The segment at 122-158 is disordered; that stretch reads QKADETSVRRKRSTDAAPQNNAENPEQKNDSAKITKR. Residues 146–158 are compositionally biased toward basic and acidic residues; it reads PEQKNDSAKITKR. A phenylalanine amide mark is found at Phe-174 and Phe-181. A propeptide spanning residues 184–194 is cleaved from the precursor; that stretch reads NPSDAGNKLTE. Phe-200 carries the post-translational modification Phenylalanine amide. Positions 203–205 are excised as a propeptide; it reads DPE. Phenylalanine amide is present on Phe-211. Residues 214–216 constitute a propeptide that is removed on maturation; sequence SDD. Phe-222 is subject to Phenylalanine amide. Residues 225-236 constitute a propeptide that is removed on maturation; the sequence is NPSDVEDELEED. Residue Phe-242 is modified to Phenylalanine amide. Positions 245 to 254 are excised as a propeptide; it reads GGEDDEEEAE. Phenylalanine amide is present on Phe-260. A propeptide spanning residues 263–265 is cleaved from the precursor; the sequence is DPE. The residue at position 271 (Phe-271) is a Phenylalanine amide. The propeptide occupies 274 to 277; sequence SGED. Residues 282-296 show a composition bias toward basic and acidic residues; the sequence is RFGRNPDEQEADKRF. The interval 282 to 310 is disordered; sequence RFGRNPDEQEADKRFMRFGRGGEDDEVST. Phe-283 carries the post-translational modification Phenylalanine amide. A propeptide spanning residues 286-293 is cleaved from the precursor; that stretch reads NPDEQEAD. Phe-299 is subject to Phenylalanine amide. Positions 302–312 are excised as a propeptide; sequence GGEDDEVSTED. Position 318 is a phenylalanine amide (Phe-318). Residues 321–331 constitute a propeptide that is removed on maturation; sequence SADKCKGCLEG.

It belongs to the FARP (FMRFamide related peptide) family.

It is found in the secreted. In terms of biological role, excitatory neurotransmitters that directly modulate chromatophore function by activating chromatophore expansion at the chromatophore neuromuscular junction. The protein is FMRFamide-related neuropeptides of Doryteuthis pealeii (Longfin inshore squid).